A 510-amino-acid chain; its full sequence is Glycogen synthase (510 aa).

Residue K18 coordinates ADP-alpha-D-glucose.

The protein belongs to the glycosyltransferase 1 family. Bacterial/plant glycogen synthase subfamily.

The catalysed reaction is [(1-&gt;4)-alpha-D-glucosyl](n) + ADP-alpha-D-glucose = [(1-&gt;4)-alpha-D-glucosyl](n+1) + ADP + H(+). It participates in glycan biosynthesis; glycogen biosynthesis. Synthesizes alpha-1,4-glucan chains using ADP-glucose. The chain is Glycogen synthase from Bordetella bronchiseptica (strain ATCC BAA-588 / NCTC 13252 / RB50) (Alcaligenes bronchisepticus).